Reading from the N-terminus, the 511-residue chain is 2,3-bisphosphoglycerate-independent phosphoglycerate mutase (511 aa).

Mn(2+) is bound by residues D12 and S62. S62 (phosphoserine intermediate) is an active-site residue. Substrate is bound by residues H123, R153 to D154, R185, R191, R260 to R263, and K335. Mn(2+) is bound by residues D402, H406, D443, H444, and H462.

The protein belongs to the BPG-independent phosphoglycerate mutase family. As to quaternary structure, monomer. Mn(2+) is required as a cofactor.

It carries out the reaction (2R)-2-phosphoglycerate = (2R)-3-phosphoglycerate. It participates in carbohydrate degradation; glycolysis; pyruvate from D-glyceraldehyde 3-phosphate: step 3/5. Functionally, catalyzes the interconversion of 2-phosphoglycerate and 3-phosphoglycerate. The polypeptide is 2,3-bisphosphoglycerate-independent phosphoglycerate mutase (Acetivibrio thermocellus (strain ATCC 27405 / DSM 1237 / JCM 9322 / NBRC 103400 / NCIMB 10682 / NRRL B-4536 / VPI 7372) (Clostridium thermocellum)).